The following is a 466-amino-acid chain: Probable periplasmic serine protease do/HhoA-like (466 aa).

Residues 1–29 (MKKTRFVLNSIALGLSVLSTSFVAHVAQA) form the signal peptide. Residues histidine 120, aspartate 150, and serine 226 each act as charge relay system in the active site. PDZ domains follow at residues 270–361 (ILEF…LRDG) and 367–458 (KMKL…LRGD).

It belongs to the peptidase S1C family.

It localises to the periplasm. The polypeptide is Probable periplasmic serine protease do/HhoA-like (Haemophilus influenzae (strain ATCC 51907 / DSM 11121 / KW20 / Rd)).